Here is a 454-residue protein sequence, read N- to C-terminus: MIDEVRELGIYTAYNANVDAIVNLNAEIIQRLIEEFGPDKIKRRLEEYPREINEPLDFVARLVHALKTGKPMAVPLVNEELHQWFDKTFKYDTERIGGQAGIIANILVGLKVKKVIAYTPFLPKRLAELFKEGILYPVVEEDKLVLKPIQSAYREGDPLKVNRIFEFRKGTRFKLGDEVIEVPHSGRFIVSSRFESISRIETKDELRKFLPEIGEMVDGAILSGYQGIRLQYSDGKDANYYLRRAKEDIRLLKKNKDIKIHVEFASIQDRRLRKKVVNNIFPMVDSVGMDEAEIAYILSVLGYSDLADRIFMYNRIEDAILGGMIILDELNFEILQVHTIYYLMYITHRDNPLSEEELMRSLDFGTILAATRASLGDINDPRDVKVGMSVPYNERSEYIKLRFEEAKRKLRLKEYKVVIVPTRLVPNPVSTVGLGDTISTGTFLSYLSLLRRHQ.

An ADPK domain is found at 1-452; the sequence is MIDEVRELGI…FLSYLSLLRR (452 aa). The Mg(2+) site is built by Glu263, Glu293, and Asp436. Residue Asp436 is the Proton acceptor of the active site.

Belongs to the carbohydrate kinase PfkC family. Homotetramer. Requires Mg(2+) as cofactor.

It is found in the cytoplasm. It catalyses the reaction beta-D-fructose 6-phosphate + ADP = beta-D-fructose 1,6-bisphosphate + AMP + H(+). It functions in the pathway carbohydrate degradation; glycolysis. Its activity is regulated as follows. Inhibited by AMP and ATP. In terms of biological role, catalyzes the phosphorylation of fructose 6-phosphate to fructose 1,6-bisphosphate using ADP as the phosphate donor. As a phosphoryl group donor, ADP can be replaced by GDP, ATP, and GTP to a limited extent. The chain is ADP-specific phosphofructokinase (pfkC) from Pyrococcus furiosus (strain ATCC 43587 / DSM 3638 / JCM 8422 / Vc1).